We begin with the raw amino-acid sequence, 430 residues long: Tapasin (430 aa).

The signal sequence occupies residues 1 to 15; it reads MAAGLRLLLAGLCWS. The Lumenal portion of the chain corresponds to 16–399; that stretch reads QFRVEDAASP…TEGPHLEDIT (384 aa). The cysteines at positions 34 and 99 are disulfide-linked. Positions 61–128 are disordered; sequence GDAETPPEPG…PDARSPPTAG (68 aa). The N-linked (GlcNAc...) asparagine glycan is linked to Asn78. A compositionally biased stretch (polar residues) spans 101 to 111; it reads LNPTNPQTGSD. 2 Ig-like C1-type domains span residues 139–273 and 278–382; these read PQYG…LQLH and PKVT…MRVS. A disulfide bridge links Cys299 with Cys368. The segment at 316-342 is disordered; the sequence is RAGGSGTSQSPRDTVMDSWTSGHRQAA. Positions 322–338 are enriched in polar residues; sequence TSQSPRDTVMDSWTSGH. The chain crosses the membrane as a helical span at residues 400–417; the sequence is GLFLVAFVLCGLIRWLYP. Residues 418 to 430 lie on the Cytoplasmic side of the membrane; the sequence is KAARPKEETKKSQ.

In terms of assembly, interacts with TAP1 and is thus a subunit of the TAP complex. Interaction with TAP1 is TAP2 independent and is required for efficient peptide-TAP interaction. Obligatory mediator for the interaction between newly assembled MHC class I molecules, calreticulin, ERp57 and TAP. Up to 4 MHC class I/tapasin complexes bind to 1 TAP.

The protein resides in the endoplasmic reticulum membrane. Its function is as follows. Involved in the association of MHC class I with transporter associated with antigen processing (TAP) and in the assembly of MHC class I with peptide (peptide loading). The chain is Tapasin (TAPBP) from Gallus gallus (Chicken).